Here is a 780-residue protein sequence, read N- to C-terminus: ATPase family gene 2 protein (780 aa).

The segment covering 1–23 has biased composition (low complexity); the sequence is MAPKSSSSGSKKKSSASSNSADA. The tract at residues 1-26 is disordered; the sequence is MAPKSSSSGSKKKSSASSNSADAKAS. Residues 286-293 and 557-564 contribute to the ATP site; these read GPPGTGKT and GPPGCSKT.

It belongs to the AAA ATPase family. AFG2 subfamily. As to quaternary structure, homohexamer; ATP binding induces oligomerization. Forms a ring-shaped particle of about 12 nm diameter, that displays 6-fold radial symmetry. Associates with cytoplasmic pre-60S ribosomal particles containing ARX1, ALB1, RLP24 and NOG1. Binds to pre-60S ribosomal particles soon after their export from the nucleus and is released before REI1 and LSG1 are incorporated into the particles. Hexameric form interacts with RLP24 (via C-terminal); the interaction recruits AFG2 to pre-60S ribosomal particles and promotes AFG2 ATPase activity and RLP24 release from pre-60S ribosomal particles. Interacts (via N-terminus) with nucleoporin NUP116 (via N-terminus); the interaction is required for RLP24 release from pre-60S ribosomal particles.

The protein resides in the cytoplasm. It carries out the reaction ATP + H2O = ADP + phosphate + H(+). With respect to regulation, the hexamer is activated by RLP24 during pre-60S ribosomal particle maturation; RLP24 activates ATPase activity of both ATP-binding regions and increases cooperativity between AFG2 subunits. The second ATP-binding region is inhibited by diazaborine; the inhibition requires prior ATP binding specifically to the second ATP-binding region. Functionally, ATP-dependent chaperone which uses the energy provided by ATP hydrolysis to generate mechanical force to disassemble protein complexes. Plays an essential role in the cytoplasmic maturation steps of pre-60S ribosomal particles by promoting the release of shuttling protein RLP24 from the pre-ribosomal particles. This step facilitates the subsequent release of other shuttling proteins such as NOG1 and allows the transition of the pre-ribosomal particles to later maturation forms that bind REI1. Essential for viability. This is ATPase family gene 2 protein from Saccharomyces cerevisiae (strain ATCC 204508 / S288c) (Baker's yeast).